Consider the following 166-residue polypeptide: Large ribosomal subunit protein uL10 (166 aa).

Belongs to the universal ribosomal protein uL10 family. As to quaternary structure, part of the ribosomal stalk of the 50S ribosomal subunit. The N-terminus interacts with L11 and the large rRNA to form the base of the stalk. The C-terminus forms an elongated spine to which L12 dimers bind in a sequential fashion forming a multimeric L10(L12)X complex.

Functionally, forms part of the ribosomal stalk, playing a central role in the interaction of the ribosome with GTP-bound translation factors. This is Large ribosomal subunit protein uL10 from Mesoplasma florum (strain ATCC 33453 / NBRC 100688 / NCTC 11704 / L1) (Acholeplasma florum).